Consider the following 586-residue polypeptide: 2-succinyl-5-enolpyruvyl-6-hydroxy-3-cyclohexene-1-carboxylate synthase (586 aa).

Belongs to the TPP enzyme family. MenD subfamily. As to quaternary structure, homodimer. Mg(2+) is required as a cofactor. It depends on Mn(2+) as a cofactor. Requires thiamine diphosphate as cofactor.

The catalysed reaction is isochorismate + 2-oxoglutarate + H(+) = 5-enolpyruvoyl-6-hydroxy-2-succinyl-cyclohex-3-ene-1-carboxylate + CO2. It participates in quinol/quinone metabolism; 1,4-dihydroxy-2-naphthoate biosynthesis; 1,4-dihydroxy-2-naphthoate from chorismate: step 2/7. The protein operates within cofactor biosynthesis; phylloquinone biosynthesis. In terms of biological role, catalyzes the thiamine diphosphate-dependent decarboxylation of 2-oxoglutarate and the subsequent addition of the resulting succinic semialdehyde-thiamine pyrophosphate anion to isochorismate to yield 2-succinyl-5-enolpyruvyl-6-hydroxy-3-cyclohexene-1-carboxylate (SEPHCHC). In Acaryochloris marina (strain MBIC 11017), this protein is 2-succinyl-5-enolpyruvyl-6-hydroxy-3-cyclohexene-1-carboxylate synthase.